The sequence spans 384 residues: Flap endonuclease 1 (384 aa).

Residues 1-105 (MGIKGLTKLL…GELAKRKDKR (105 aa)) are N-domain. D34 lines the Mg(2+) pocket. R71 provides a ligand contact to DNA. Mg(2+)-binding residues include D87, E159, E161, D180, and D182. The tract at residues 123 to 254 (EIEKLSKRTV…VNALKYIKQY (132 aa)) is I-domain. E159 is a binding site for DNA. 2 residues coordinate DNA: G232 and D234. A Mg(2+)-binding site is contributed by D234. The interaction with PCNA stretch occupies residues 337–345 (GQNRLETFF). The segment at 353-384 (STVGKRKEPEKGKGKFGAAGGKKSKGVTKRKF) is disordered. Residues 374–384 (KKSKGVTKRKF) show a composition bias toward basic residues.

This sequence belongs to the XPG/RAD2 endonuclease family. FEN1 subfamily. In terms of assembly, interacts with PCNA. Three molecules of FEN1 bind to one PCNA trimer with each molecule binding to one PCNA monomer. PCNA stimulates the nuclease activity without altering cleavage specificity. Requires Mg(2+) as cofactor. Phosphorylated. Phosphorylation upon DNA damage induces relocalization to the nuclear plasma.

Its subcellular location is the nucleus. It is found in the nucleolus. The protein resides in the nucleoplasm. The protein localises to the mitochondrion. Its function is as follows. Structure-specific nuclease with 5'-flap endonuclease and 5'-3' exonuclease activities involved in DNA replication and repair. During DNA replication, cleaves the 5'-overhanging flap structure that is generated by displacement synthesis when DNA polymerase encounters the 5'-end of a downstream Okazaki fragment. It enters the flap from the 5'-end and then tracks to cleave the flap base, leaving a nick for ligation. Also involved in the long patch base excision repair (LP-BER) pathway, by cleaving within the apurinic/apyrimidinic (AP) site-terminated flap. Acts as a genome stabilization factor that prevents flaps from equilibrating into structures that lead to duplications and deletions. Also possesses 5'-3' exonuclease activity on nicked or gapped double-stranded DNA, and exhibits RNase H activity. Also involved in replication and repair of rDNA and in repairing mitochondrial DNA. The polypeptide is Flap endonuclease 1 (Micromonas commoda (strain RCC299 / NOUM17 / CCMP2709) (Picoplanktonic green alga)).